The following is a 205-amino-acid chain: MNRKGGLFSSQERVKQYVSHTDAAAAKQIQTILSSSLRKAAGKPIVVVCIGTDRSTGDSLGPLVGMKLKQMQLTRFHVYGTLSDPVHAVNMKDKINDIHKLHKNPFVIAVDACLGRVKSVGSFQIGDGPLKPGAGVQKDLPEVGDLHINGIVNVSGFMEYFVLQNTRLNLVMNMANVLAEGLSLTDRTEWRQERLNPLQRLTGRI.

This is an uncharacterized protein from Bacillus subtilis (strain 168).